The sequence spans 178 residues: Large ribosomal subunit protein uL5 (178 aa).

This sequence belongs to the universal ribosomal protein uL5 family. Part of the 50S ribosomal subunit; part of the 5S rRNA/L5/L18/L25 subcomplex. Contacts the 5S rRNA and the P site tRNA. Forms a bridge to the 30S subunit in the 70S ribosome.

In terms of biological role, this is one of the proteins that bind and probably mediate the attachment of the 5S RNA into the large ribosomal subunit, where it forms part of the central protuberance. In the 70S ribosome it contacts protein S13 of the 30S subunit (bridge B1b), connecting the 2 subunits; this bridge is implicated in subunit movement. Contacts the P site tRNA; the 5S rRNA and some of its associated proteins might help stabilize positioning of ribosome-bound tRNAs. The protein is Large ribosomal subunit protein uL5 of Psychrobacter cryohalolentis (strain ATCC BAA-1226 / DSM 17306 / VKM B-2378 / K5).